The following is a 330-amino-acid chain: Glucokinase (330 aa).

Belongs to the ROK (NagC/XylR) family.

The protein localises to the cytoplasm. It catalyses the reaction D-glucose + ATP = D-glucose 6-phosphate + ADP + H(+). This chain is Glucokinase (glcK), found in Halalkalibacterium halodurans (strain ATCC BAA-125 / DSM 18197 / FERM 7344 / JCM 9153 / C-125) (Bacillus halodurans).